Consider the following 372-residue polypeptide: DNA primase small subunit PriS (372 aa).

Residues D95, D97, and D280 contribute to the active site.

The protein belongs to the eukaryotic-type primase small subunit family. As to quaternary structure, heterodimer of a small subunit (PriS) and a large subunit (PriL). Mg(2+) is required as a cofactor. Mn(2+) serves as cofactor.

Its function is as follows. Catalytic subunit of DNA primase, an RNA polymerase that catalyzes the synthesis of short RNA molecules used as primers for DNA polymerase during DNA replication. The small subunit contains the primase catalytic core and has DNA synthesis activity on its own. Binding to the large subunit stabilizes and modulates the activity, increasing the rate of DNA synthesis while decreasing the length of the DNA fragments, and conferring RNA synthesis capability. The DNA polymerase activity may enable DNA primase to also catalyze primer extension after primer synthesis. May also play a role in DNA repair. This Cenarchaeum symbiosum (strain A) protein is DNA primase small subunit PriS.